Reading from the N-terminus, the 378-residue chain is MKTTILLLVVLTIVQLSKAKDNLQFVFVTAKGQDHQACNYPQGPKITNIEEPDSELTEDGKKEAYEFGQKLSSEYKSRLGVTKWDSAQNYWAIAAIEKRTKKATLITAGVIAKRQSVTSKTWSDEELQKTSFPALNDFFRFINPQHCPKYIKSILSKQNDINTILGKCEAALKTVKEHYPAVNKPQHTWLVYETFKRMKQQKASNLEWLTDDIMKQLQACSAEITWFAATNSDEWRKISGGLLLTDIFTDLDQITQGKPQPYAPGGANNKMSLFTVPQVLVISHLAVITPPGTKIGSKDVTAQNIYPEDGAYVNLELFKGDKEDWKVKIVYVKGKGEPQQTIALPGCPEKCPYNKFKQILQQYAISDDDHKKACGFPA.

A signal peptide spans 1–19; it reads MKTTILLLVVLTIVQLSKA. 3 disulfide bridges follow: Cys147–Cys374, Cys168–Cys220, and Cys347–Cys351.

It belongs to the histidine acid phosphatase family.

The protein localises to the secreted. Its function is as follows. Probably modulates blood feeding of fleas on vertebrate species by binding and sequestering different mediators involved in the host response. Binds histamine. Binds leukotriene B4, leukotriene C4, leukotriene D4 and leukotriene E4. Does not bind serotonin, adrenaline, noradrenaline, ADP, and stable analogs of thromboxane A2: U-46619 and cTXA2. In Xenopsylla cheopis (Oriental rat flea), this protein is Acid phosphatase-like protein XcAP-2.